The primary structure comprises 20 residues: Snaclec ophioluxin subunit alpha (20 aa).

An intrachain disulfide couples Cys4 to Cys15. Positions Tyr11–Asn20 constitute a C-type lectin domain.

Belongs to the snaclec family. As to quaternary structure, heterodimer of subunits alpha and beta; disulfide-linked. In terms of tissue distribution, expressed by the venom gland.

The protein localises to the secreted. Functionally, binds to the platelet and collagen receptor glycoprotein VI (GP6) and activates platelet aggregation. This is Snaclec ophioluxin subunit alpha from Ophiophagus hannah (King cobra).